We begin with the raw amino-acid sequence, 115 residues long: Nitrogenase-stabilizing/protective protein NifW (115 aa).

The protein belongs to the NifW family. As to quaternary structure, homotrimer; associates with NifD.

Its function is as follows. May protect the nitrogenase Fe-Mo protein from oxidative damage. In Rhodopseudomonas palustris (strain BisB18), this protein is Nitrogenase-stabilizing/protective protein NifW.